Consider the following 412-residue polypeptide: LL-diaminopimelate aminotransferase (412 aa).

The substrate site is built by tyrosine 15 and glycine 42. Pyridoxal 5'-phosphate-binding positions include tyrosine 72, 108–109 (SK), tyrosine 132, asparagine 187, tyrosine 218, and 246–248 (SFS). Substrate contacts are provided by lysine 109, tyrosine 132, and asparagine 187. Lysine 249 is modified (N6-(pyridoxal phosphate)lysine). The pyridoxal 5'-phosphate site is built by arginine 257 and asparagine 292. Substrate contacts are provided by asparagine 292 and arginine 388.

It belongs to the class-I pyridoxal-phosphate-dependent aminotransferase family. LL-diaminopimelate aminotransferase subfamily. Homodimer. It depends on pyridoxal 5'-phosphate as a cofactor.

The enzyme catalyses (2S,6S)-2,6-diaminopimelate + 2-oxoglutarate = (S)-2,3,4,5-tetrahydrodipicolinate + L-glutamate + H2O + H(+). Its pathway is amino-acid biosynthesis; L-lysine biosynthesis via DAP pathway; LL-2,6-diaminopimelate from (S)-tetrahydrodipicolinate (aminotransferase route): step 1/1. Involved in the synthesis of meso-diaminopimelate (m-DAP or DL-DAP), required for both lysine and peptidoglycan biosynthesis. Catalyzes the direct conversion of tetrahydrodipicolinate to LL-diaminopimelate. The chain is LL-diaminopimelate aminotransferase from Synechocystis sp. (strain ATCC 27184 / PCC 6803 / Kazusa).